The sequence spans 167 residues: Nascent polypeptide-associated complex subunit beta (167 aa).

Disordered stretches follow at residues 1 to 48 and 133 to 167; these read MDQA…GADD and QNMQKNQAGAEGKKDDEEDDIPDLVEGQDFESKVE. The span at 25 to 42 shows a compositional bias: basic residues; the sequence is NRNRGKGTPRRKVKKVHK. An NAC-A/B domain is found at 45–110; it reads GADDKKLQAT…GEEKELTELV (66 aa). Residues 148–161 show a composition bias toward acidic residues; the sequence is DEEDDIPDLVEGQD.

Belongs to the NAC-beta family. Part of the nascent polypeptide-associated complex (NAC), consisting of egd2 and egd1. NAC associates with ribosomes via egd1.

It is found in the cytoplasm. The protein resides in the nucleus. Functionally, component of the nascent polypeptide-associated complex (NAC), a dynamic component of the ribosomal exit tunnel, protecting the emerging polypeptides from interaction with other cytoplasmic proteins to ensure appropriate nascent protein targeting. The NAC complex also promotes mitochondrial protein import by enhancing productive ribosome interactions with the outer mitochondrial membrane and blocks the inappropriate interaction of ribosomes translating non-secretory nascent polypeptides with translocation sites in the membrane of the endoplasmic reticulum. EGD1 may act as a transcription factor that exert a negative effect on the expression of several genes that are transcribed by RNA polymerase II. The protein is Nascent polypeptide-associated complex subunit beta (egd1) of Aspergillus terreus (strain NIH 2624 / FGSC A1156).